The following is a 179-amino-acid chain: Apoptosis regulator Bcl-2 homolog (179 aa).

The BH1 motif lies at 76-95 (ELFKDLINWGRICGFIVFSA). The BH2 signature appears at 126–141 (PWMISHGGQEEFLAFS).

Belongs to the Bcl-2 family. In terms of assembly, interacts with host BECN1 (via BH3 homology domain); this interaction allows the virus to inhibit BECN1, and thus autophagy. Interacts with host BID. Interacts with host BAX.

The protein resides in the host mitochondrion. The protein localises to the host endoplasmic reticulum. Suppresses apoptosis in host cell to promote the viral replication. Has the ability to potentially bind to all the members of the proapoptotic Bcl-2 family. Inhibits autophagy by interacting with host Beclin 1 (BECN1). This is Apoptosis regulator Bcl-2 homolog from Ornithodoros (relapsing fever ticks).